Here is a 79-residue protein sequence, read N- to C-terminus: Small proline-rich protein 4 (79 aa).

Low complexity predominate over residues 1–26; the sequence is MSSQQQQRQQQQCPPQRAQQQQVKQP. Positions 1 to 79 are disordered; it reads MSSQQQQRQQ…AQQASKSKQK (79 aa). Residues 66–79 are compositionally biased toward polar residues; the sequence is KCPSAQQASKSKQK.

This sequence belongs to the cornifin (SPRR) family. Post-translationally, cross-linked to membrane proteins by transglutaminase.

The protein resides in the cytoplasm. Its subcellular location is the cell cortex. Functionally, cross-linked envelope protein of keratinocytes. Involved in UV-induced cornification. In Homo sapiens (Human), this protein is Small proline-rich protein 4 (SPRR4).